Consider the following 1242-residue polypeptide: Myosin-16 (1242 aa).

Residues 6-55 (MVDSHVWVEDPERAWIDGVVLNIKGEEAEIKTNDGRDVIANLSRLYPKDT) form the Myosin N-terminal SH3-like domain. Residues 60 to 729 (EGVEDMTRLS…QMAELDAHRT (670 aa)) enclose the Myosin motor domain. Residues 154–161 (GESGSGKT) and 207–215 (NNNSSRFGK) each bind ATP. 4 actin-binding regions span residues 493–527 (LIEKKPGGIIALLDEACMLPKSTPETFSEKLYHTF), 529–552 (DHKRFMKPKLTRSDFTLVHYAGDV), 587–610 (FPPLPKESSKSKFSSIGARFKLQL), and 610–632 (LQQLMETLNSTEPHYIRCVKPNN). IQ domains lie at 732–761 (LGESARMIQGQVRTRLTRERFVLMRRASVN), 755–784 (MRRASVNIQANWRGNIARKISKEMRREEAA), 780–809 (REEAAIKIQKNLRRQIAKKDYGKTKSSALT), 803–832 (TKSSALTLQSGVRTMAARHEFRYKLTTRAA), 828–857 (TTRAATVIQAYWRGYSAISDYKKLKRVSLL), and 851–880 (LKRVSLLCKSNLRGRIARKQLGQSKQADRK). Disordered regions lie at residues 869–893 (KQLGQSKQADRKEETEKERKVELSN) and 908–1042 (EQSD…ERKT). A compositionally biased stretch (basic and acidic residues) spans 876 to 893 (QADRKEETEKERKVELSN). Tandem repeats lie at residues 876–908 (QADRKEETEKERKVELSNRAEEAVDMSFVLHSE), 909–940 (QSDDAESGHGRKAKLSIESEDGLDKSSVLHSE), 941–965 (QSDDEELGHERKTKLSIESEDGHSD), 966–997 (QSDDEEIEHERKTKHCIQAEDGIEKSYVMHSD), 998–1029 (QSDDEEIGHKRKTKHSIQAEDGIEKSFVVHSD), and 1030–1061 (QSDDEEIGHERKTKHAIQVEDGIQKSFVTCSE). The interval 876-1061 (QADRKEETEK…IQKSFVTCSE (186 aa)) is 6 X 33 AA repeats of Q-S-D-D-x-E-E-x(2)-H-x-R-K-x-K-x(2)-I-x(2)-E-D-G-x(3)-S-x-V-x-H-S-x. Positions 948-966 (GHERKTKLSIESEDGHSDQ) are enriched in basic and acidic residues. The stretch at 1079 to 1142 (DTEIESLTAE…QLQDSLNRLL (64 aa)) forms a coiled coil. The segment at 1175 to 1242 (DLADSSENSE…DKEGGFEDYF (68 aa)) is disordered. A compositionally biased stretch (low complexity) spans 1179–1191 (SSENSEASSSDSD). Residues 1199–1224 (PSSDNFSTFNPNQLQVIVQDLSTTEA) are compositionally biased toward polar residues. Basic and acidic residues predominate over residues 1225–1242 (KGTESYDSDKEGGFEDYF).

This sequence belongs to the TRAFAC class myosin-kinesin ATPase superfamily. Myosin family. Plant myosin class XI subfamily. As to quaternary structure, homodimer. As to expression, expressed in flowers and leaves.

It is found in the cytoplasm. Myosin heavy chain that is required for the cell cycle-regulated transport of various organelles and proteins for their segregation. Functions by binding with its tail domain to receptor proteins on organelles and exerting force with its N-terminal motor domain against actin filaments, thereby transporting its cargo along polarized actin cables. The protein is Myosin-16 (XI-J) of Arabidopsis thaliana (Mouse-ear cress).